Consider the following 361-residue polypeptide: Chorismate synthase (361 aa).

NADP(+)-binding residues include R48 and R54. FMN is bound by residues R125 to S127, N238 to A239, G278, K293 to S297, and R319.

Belongs to the chorismate synthase family. Homotetramer. FMNH2 serves as cofactor.

The catalysed reaction is 5-O-(1-carboxyvinyl)-3-phosphoshikimate = chorismate + phosphate. Its pathway is metabolic intermediate biosynthesis; chorismate biosynthesis; chorismate from D-erythrose 4-phosphate and phosphoenolpyruvate: step 7/7. Catalyzes the anti-1,4-elimination of the C-3 phosphate and the C-6 proR hydrogen from 5-enolpyruvylshikimate-3-phosphate (EPSP) to yield chorismate, which is the branch point compound that serves as the starting substrate for the three terminal pathways of aromatic amino acid biosynthesis. This reaction introduces a second double bond into the aromatic ring system. The protein is Chorismate synthase of Escherichia coli O7:K1 (strain IAI39 / ExPEC).